The primary structure comprises 128 residues: UPF0325 protein YaeH (128 aa).

This sequence belongs to the UPF0325 family.

This chain is UPF0325 protein YaeH, found in Escherichia coli (strain ATCC 8739 / DSM 1576 / NBRC 3972 / NCIMB 8545 / WDCM 00012 / Crooks).